A 141-amino-acid polypeptide reads, in one-letter code: D-aminoacyl-tRNA deacylase (141 aa).

The Gly-cisPro motif, important for rejection of L-amino acids signature appears at 133–134; sequence GP.

The protein belongs to the DTD family. In terms of assembly, homodimer.

Its subcellular location is the cytoplasm. The catalysed reaction is glycyl-tRNA(Ala) + H2O = tRNA(Ala) + glycine + H(+). The enzyme catalyses a D-aminoacyl-tRNA + H2O = a tRNA + a D-alpha-amino acid + H(+). In terms of biological role, an aminoacyl-tRNA editing enzyme that deacylates mischarged D-aminoacyl-tRNAs. Also deacylates mischarged glycyl-tRNA(Ala), protecting cells against glycine mischarging by AlaRS. Acts via tRNA-based rather than protein-based catalysis; rejects L-amino acids rather than detecting D-amino acids in the active site. By recycling D-aminoacyl-tRNA to D-amino acids and free tRNA molecules, this enzyme counteracts the toxicity associated with the formation of D-aminoacyl-tRNA entities in vivo and helps enforce protein L-homochirality. The chain is D-aminoacyl-tRNA deacylase from Nautilia profundicola (strain ATCC BAA-1463 / DSM 18972 / AmH).